A 353-amino-acid polypeptide reads, in one-letter code: Variable large protein 17 (353 aa).

The signal sequence occupies residues 1–18; that stretch reads MRKRISAIIMTLFMVLVS. Cys-19 is lipidated: N-palmitoyl cysteine. A lipid anchor (S-diacylglycerol cysteine) is attached at Cys-19. Residues 332–353 form a disordered region; that stretch reads EDKSVEATNTAEATTSGQQAKN. Residues 337–353 are compositionally biased toward polar residues; it reads EATNTAEATTSGQQAKN.

This sequence belongs to the variable large protein (Vlp) family. Delta subfamily.

The protein resides in the cell outer membrane. In terms of biological role, the Vlp and Vsp proteins are antigenically distinct proteins, only one vlp or vsp gene is transcriptionally active at any one time. Switching between these genes is a mechanism of host immune response evasion. The sequence is that of Variable large protein 17 from Borrelia hermsii.